The following is a 215-amino-acid chain: Large ribosomal subunit protein bL25 (215 aa).

Acidic residues predominate over residues 192–203 (EEATEEEEEAAE). The tract at residues 192 to 215 (EEATEEEEEAAEPEVIKRKEEEEE) is disordered. A compositionally biased stretch (basic and acidic residues) spans 205–215 (EVIKRKEEEEE).

Belongs to the bacterial ribosomal protein bL25 family. CTC subfamily. As to quaternary structure, part of the 50S ribosomal subunit; part of the 5S rRNA/L5/L18/L25 subcomplex. Contacts the 5S rRNA. Binds to the 5S rRNA independently of L5 and L18.

In terms of biological role, this is one of the proteins that binds to the 5S RNA in the ribosome where it forms part of the central protuberance. The chain is Large ribosomal subunit protein bL25 from Thermotoga sp. (strain RQ2).